A 652-amino-acid polypeptide reads, in one-letter code: Ethylmalonyl-CoA mutase (652 aa).

The B12-binding domain occupies 519–647; sequence PLKFVVGKPG…MDIVGLVDRT (129 aa). H532 contributes to the adenosylcob(III)alamin binding site.

The protein belongs to the methylmalonyl-CoA mutase family. Homodimer. The cofactor is adenosylcob(III)alamin.

It catalyses the reaction (2R)-ethylmalonyl-CoA = (2S)-methylsuccinyl-CoA. Functionally, radical enzyme that catalyzes the transformation of (2R)-ethylmalonyl-CoA to (2S)-methylsuccinyl-CoA. Is involved in the ethylmalonyl-CoA pathway for acetyl-CoA assimilation required for R.sphaeroides growth on acetate as sole carbon source. Is highly specific for its substrate, ethylmalonyl-CoA, and accepts methylmalonyl-CoA only at 0.2% relative activity. The chain is Ethylmalonyl-CoA mutase from Cereibacter sphaeroides (strain ATCC 17023 / DSM 158 / JCM 6121 / CCUG 31486 / LMG 2827 / NBRC 12203 / NCIMB 8253 / ATH 2.4.1.) (Rhodobacter sphaeroides).